The sequence spans 415 residues: Transposase for insertion sequence element IS1081 (415 aa).

It belongs to the transposase mutator family.

Functionally, required for the transposition of the insertion element. This is Transposase for insertion sequence element IS1081 from Mycobacterium bovis (strain ATCC BAA-935 / AF2122/97).